Reading from the N-terminus, the 391-residue chain is S-adenosylmethionine synthase (391 aa).

Residue His14 participates in ATP binding. Asp16 contacts Mg(2+). Glu42 serves as a coordination point for K(+). The L-methionine site is built by Glu55 and Gln98. Residues 98-108 (QSVDIAMGVDE) form a flexible loop region. ATP-binding positions include 172-174 (DGK), 238-239 (RF), Asp247, 253-254 (RK), Ala270, and Lys274. An L-methionine-binding site is contributed by Asp247. Position 278 (Lys278) interacts with L-methionine.

The protein belongs to the AdoMet synthase family. As to quaternary structure, homotetramer; dimer of dimers. Mg(2+) is required as a cofactor. K(+) serves as cofactor.

Its subcellular location is the cytoplasm. It catalyses the reaction L-methionine + ATP + H2O = S-adenosyl-L-methionine + phosphate + diphosphate. Its pathway is amino-acid biosynthesis; S-adenosyl-L-methionine biosynthesis; S-adenosyl-L-methionine from L-methionine: step 1/1. Its function is as follows. Catalyzes the formation of S-adenosylmethionine (AdoMet) from methionine and ATP. The overall synthetic reaction is composed of two sequential steps, AdoMet formation and the subsequent tripolyphosphate hydrolysis which occurs prior to release of AdoMet from the enzyme. In Clostridium botulinum (strain Hall / ATCC 3502 / NCTC 13319 / Type A), this protein is S-adenosylmethionine synthase.